We begin with the raw amino-acid sequence, 155 residues long: Cytochrome c-type biogenesis protein CcmE (155 aa).

At 1-8 the chain is on the cytoplasmic side; sequence MNPVRKKR. The helical; Signal-anchor for type II membrane protein transmembrane segment at 9-29 threads the bilayer; sequence LFIVLAILAGVGIAVALALSA. Topologically, residues 30 to 155 are periplasmic; the sequence is LQQNINLFYT…YEGGKQEYAK (126 aa). Residues H124 and Y128 each contribute to the heme site.

Belongs to the CcmE/CycJ family.

It localises to the cell inner membrane. Functionally, heme chaperone required for the biogenesis of c-type cytochromes. Transiently binds heme delivered by CcmC and transfers the heme to apo-cytochromes in a process facilitated by CcmF and CcmH. This is Cytochrome c-type biogenesis protein CcmE from Stutzerimonas stutzeri (strain A1501) (Pseudomonas stutzeri).